A 228-amino-acid polypeptide reads, in one-letter code: MNSVVLLSGGLDSAVNLAFARTEGNVKLALTINYRQRAAHKEIAAAAQLARYYAIPHRVIELPWLAEITKTALVRSESQLPEPKTEELDQLELAGKTAAEVWVPNRNGLFVNIAACFAETLHCEIVVAGFNCEEAATFPDNTPEFALAASAAMQYSTANQVKVLSYTGRLNKKDIVALGQRLQLPWELIWSCYRGEALMCGKCESCQRMIRAFHSLGLNLPQNFLMTE.

An ATP-binding site is contributed by 7-17 (LSGGLDSAVNL). Positions 192, 200, 203, and 206 each coordinate Zn(2+).

This sequence belongs to the QueC family. As to quaternary structure, homodimer. The cofactor is Zn(2+).

The catalysed reaction is 7-carboxy-7-deazaguanine + NH4(+) + ATP = 7-cyano-7-deazaguanine + ADP + phosphate + H2O + H(+). It functions in the pathway purine metabolism; 7-cyano-7-deazaguanine biosynthesis. Catalyzes the ATP-dependent conversion of 7-carboxy-7-deazaguanine (CDG) to 7-cyano-7-deazaguanine (preQ(0)). This is 7-cyano-7-deazaguanine synthase from Desulforamulus reducens (strain ATCC BAA-1160 / DSM 100696 / MI-1) (Desulfotomaculum reducens).